The following is a 207-amino-acid chain: MTRSPAPSSPTHPRRLGLTGSIGAGKSTVARLLRERGLTVLDADAEARWVTEQPEVLTELNEAFPGVVTGGTLDRAGLAARVFSDPAQVARLNAITHPRVRARMEALEAAATARGEHWVVQDIPLLFEGGLERGMDAVLVVDAPLELRLERALARGGLTREDILARDARQLSSEEKRRRATIVLDNSGPLEALEGQLDAALRQLEIT.

The segment covering 1-11 has biased composition (polar residues); the sequence is MTRSPAPSSPT. Positions 1-21 are disordered; the sequence is MTRSPAPSSPTHPRRLGLTGS. The DPCK domain occupies 15 to 207; that stretch reads RLGLTGSIGA…DAALRQLEIT (193 aa). Position 23–28 (23–28) interacts with ATP; sequence GAGKST.

The protein belongs to the CoaE family.

The protein localises to the cytoplasm. It carries out the reaction 3'-dephospho-CoA + ATP = ADP + CoA + H(+). The protein operates within cofactor biosynthesis; coenzyme A biosynthesis; CoA from (R)-pantothenate: step 5/5. Catalyzes the phosphorylation of the 3'-hydroxyl group of dephosphocoenzyme A to form coenzyme A. The chain is Dephospho-CoA kinase from Deinococcus radiodurans (strain ATCC 13939 / DSM 20539 / JCM 16871 / CCUG 27074 / LMG 4051 / NBRC 15346 / NCIMB 9279 / VKM B-1422 / R1).